The following is a 975-amino-acid chain: Glycine dehydrogenase (decarboxylating) (975 aa).

Lys723 bears the N6-(pyridoxal phosphate)lysine mark.

It belongs to the GcvP family. In terms of assembly, the glycine cleavage system is composed of four proteins: P, T, L and H. Pyridoxal 5'-phosphate serves as cofactor.

The catalysed reaction is N(6)-[(R)-lipoyl]-L-lysyl-[glycine-cleavage complex H protein] + glycine + H(+) = N(6)-[(R)-S(8)-aminomethyldihydrolipoyl]-L-lysyl-[glycine-cleavage complex H protein] + CO2. In terms of biological role, the glycine cleavage system catalyzes the degradation of glycine. The P protein binds the alpha-amino group of glycine through its pyridoxal phosphate cofactor; CO(2) is released and the remaining methylamine moiety is then transferred to the lipoamide cofactor of the H protein. This Burkholderia multivorans (strain ATCC 17616 / 249) protein is Glycine dehydrogenase (decarboxylating).